We begin with the raw amino-acid sequence, 242 residues long: Host range factor p28 (242 aa).

The KilA-N domain occupies 21 to 131 (YIDEPNDIRL…QSILRGLVNW (111 aa)). The RING-type zinc finger occupies 173-226 (CGICYEVVYSKRLENDRYFGLLDSCNHIFCITCINIWHRTRRETGASDNCPICR).

Belongs to the orthopoxvirus OPG021 family.

It localises to the host cytoplasm. The enzyme catalyses S-ubiquitinyl-[E2 ubiquitin-conjugating enzyme]-L-cysteine + [acceptor protein]-L-lysine = [E2 ubiquitin-conjugating enzyme]-L-cysteine + N(6)-ubiquitinyl-[acceptor protein]-L-lysine.. RING-finger E3 ubiquitin ligase which catalyzes the formation of both 'Lys-48'- and 'Lys-63'-linked polyubiquitin chains. Plays an important role in virulence by acting as an anti-apoptotic factor. This Monkeypox virus protein is Host range factor p28 (OPG021).